Consider the following 24-residue polypeptide: Coenzyme PQQ synthesis protein A (24 aa).

The segment at residues 16–20 is a cross-link (pyrroloquinoline quinone (Glu-Tyr)); the sequence is EVTMY.

This sequence belongs to the PqqA family.

It participates in cofactor biosynthesis; pyrroloquinoline quinone biosynthesis. In terms of biological role, required for coenzyme pyrroloquinoline quinone (PQQ) biosynthesis. PQQ is probably formed by cross-linking a specific glutamate to a specific tyrosine residue and excising these residues from the peptide. This is Coenzyme PQQ synthesis protein A from Acinetobacter baumannii (strain SDF).